We begin with the raw amino-acid sequence, 352 residues long: Speedy protein E18 (352 aa).

A compositionally biased stretch (basic residues) spans Met1–Gly12. Residues Met1–Pro90 are disordered. The span at Gly16–Tyr39 shows a compositional bias: polar residues. Positions Asp76–Pro90 are enriched in acidic residues.

The protein belongs to the Speedy/Ringo family.

This chain is Speedy protein E18, found in Homo sapiens (Human).